The sequence spans 120 residues: Large ribosomal subunit protein eL8 (120 aa).

The protein belongs to the eukaryotic ribosomal protein eL8 family. In terms of assembly, part of the 50S ribosomal subunit. Probably part of the RNase P complex.

It is found in the cytoplasm. Its function is as follows. Multifunctional RNA-binding protein that recognizes the K-turn motif in ribosomal RNA, the RNA component of RNase P, box H/ACA, box C/D and box C'/D' sRNAs. In Methanosarcina acetivorans (strain ATCC 35395 / DSM 2834 / JCM 12185 / C2A), this protein is Large ribosomal subunit protein eL8.